A 457-amino-acid chain; its full sequence is MITREFDTIAAISTPLGEGAIGIVRLSGTDSFAIAQKIFKGKDLSKVASHTLNYGHIVDPQNQEVLDEVMIGAMRSPKTFTREDIIEINTHGGIAVTNEILQLAIREGARMAEPGEFTKRAFLNGRVDLTQAEAVMDIIRAKTDKAMNNAVKQLDGSLSNLINNTRQEILNTLAQVEVNIDYPEYDDVEEMTTQLMREKTAEFEELLTSLLNTARRGKILREGISTAIIGRPNVGKSSLLNNLLREDKAIVTDIAGTTRDVIEEYVNIKGVPLKLIDTAGIRETDDLVEQIGVERSKKALQEADLVLLVLNASEPLTDQDKQLLEISQDSNRIVLLNKTDLEEKIELDQLPTDIIKISVLHNQNIDKIEERINQLFFENAGIVEQDATYLSNARHISLIEKALESLQAVNQGLEMGMPVDLLQVDMTRTWEILGEITGDAAPDELITQLFSQFCLGK.

(6S)-5-formyl-5,6,7,8-tetrahydrofolate-binding residues include Arg25, Glu87, and Arg126. In terms of domain architecture, TrmE-type G spans 223-377; it reads GISTAIIGRP…IEERINQLFF (155 aa). Asn233 serves as a coordination point for K(+). Residues 233–238, 252–258, and 277–280 each bind GTP; these read NVGKSS, TDIAGTT, and DTAG. Ser237 lines the Mg(2+) pocket. Thr252, Ile254, and Thr257 together coordinate K(+). Thr258 serves as a coordination point for Mg(2+). Lys457 contributes to the (6S)-5-formyl-5,6,7,8-tetrahydrofolate binding site.

Belongs to the TRAFAC class TrmE-Era-EngA-EngB-Septin-like GTPase superfamily. TrmE GTPase family. Homodimer. Heterotetramer of two MnmE and two MnmG subunits. K(+) is required as a cofactor.

It is found in the cytoplasm. Exhibits a very high intrinsic GTPase hydrolysis rate. Involved in the addition of a carboxymethylaminomethyl (cmnm) group at the wobble position (U34) of certain tRNAs, forming tRNA-cmnm(5)s(2)U34. The sequence is that of tRNA modification GTPase MnmE from Streptococcus gordonii (strain Challis / ATCC 35105 / BCRC 15272 / CH1 / DL1 / V288).